The sequence spans 294 residues: MEHVPGKKPEWLKIRLSSGASFASTKRLLDRHSLHTVCRSAMCPNLQECWSRGTATFLLLGTVCTRNCRFCAVGKASNPPAPDPREPEKIALAVHSMQLKHTVLTSVTRDDLPDGGAEYWVATIRAIRTLNPFVTIECLIPDFEGNERAMDLVMAELPEILNHNIETVPSLYTKVRPQANYATSLRLLQRAKEMHGLTTKSGMMVGMGETAEEVAISLGDLLLHGCDMVTIGQYLQPSALHLPVERYITPEEFEQYRSFAEGAGFRHVQSGPFVRSSYHAEALTKKTETVCSPI.

Positions 38, 43, 49, 64, 68, 71, and 277 each coordinate [4Fe-4S] cluster. A Radical SAM core domain is found at 50–266; that stretch reads WSRGTATFLL…RSFAEGAGFR (217 aa).

This sequence belongs to the radical SAM superfamily. Lipoyl synthase family. Requires [4Fe-4S] cluster as cofactor.

The protein localises to the cytoplasm. It catalyses the reaction [[Fe-S] cluster scaffold protein carrying a second [4Fe-4S](2+) cluster] + N(6)-octanoyl-L-lysyl-[protein] + 2 oxidized [2Fe-2S]-[ferredoxin] + 2 S-adenosyl-L-methionine + 4 H(+) = [[Fe-S] cluster scaffold protein] + N(6)-[(R)-dihydrolipoyl]-L-lysyl-[protein] + 4 Fe(3+) + 2 hydrogen sulfide + 2 5'-deoxyadenosine + 2 L-methionine + 2 reduced [2Fe-2S]-[ferredoxin]. Its pathway is protein modification; protein lipoylation via endogenous pathway; protein N(6)-(lipoyl)lysine from octanoyl-[acyl-carrier-protein]: step 2/2. Functionally, catalyzes the radical-mediated insertion of two sulfur atoms into the C-6 and C-8 positions of the octanoyl moiety bound to the lipoyl domains of lipoate-dependent enzymes, thereby converting the octanoylated domains into lipoylated derivatives. In Pelodictyon phaeoclathratiforme (strain DSM 5477 / BU-1), this protein is Lipoyl synthase.